The sequence spans 322 residues: Sideroflexin-1 (322 aa).

Position 2 is an N-acetylserine (Ser-2). Residues 2-102 lie on the Mitochondrial matrix side of the membrane; the sequence is SGELPPNINI…MSAQVPMNMT (101 aa). Residues 103–120 form a helical membrane-spanning segment; sequence ITGCMMTFYRTTPAVLFW. The Mitochondrial intermembrane segment spans residues 121–146; the sequence is QWINQSFNAVVNYTNRSGDAPLTVNE. The chain crosses the membrane as a helical span at residues 147–167; the sequence is LGTAYVSATTGAVATALGLNA. Residues 168–174 lie on the Mitochondrial matrix side of the membrane; the sequence is LTKHVSP. A helical membrane pass occupies residues 175-195; the sequence is LIGRFVPFAAVAAANCINIPL. Residues 196 to 228 lie on the Mitochondrial intermembrane side of the membrane; it reads MRQRELKVGIPVTDENGNRLGESANAAKQAITQ. Residues 229-249 form a helical membrane-spanning segment; it reads VVVSRILMAAPGMAIPPFIMN. The Mitochondrial matrix portion of the chain corresponds to 250–266; sequence TLEKKAFLKRFPWMSAP. A helical membrane pass occupies residues 267–287; it reads VQVGIVGFCLVFATPLCCALF. Residues 288–322 are Mitochondrial intermembrane-facing; the sequence is PQKSSMSVTSLEAELQARIRETYPELRRVYFNKGL.

The protein belongs to the sideroflexin family.

The protein resides in the mitochondrion inner membrane. The catalysed reaction is L-serine(in) = L-serine(out). The enzyme catalyses L-alanine(in) = L-alanine(out). It carries out the reaction L-cysteine(in) = L-cysteine(out). Functionally, amino acid transporter importing serine, an essential substrate of the mitochondrial branch of the one-carbon pathway, into mitochondria. Mitochondrial serine is then converted to glycine and formate, which exits to the cytosol where it is used to generate the charged folates that serve as one-carbon donors. May also transport other amino acids including alanine and cysteine. The protein is Sideroflexin-1 (SFXN1) of Bos taurus (Bovine).